We begin with the raw amino-acid sequence, 870 residues long: LPS-assembly protein LptD (870 aa).

Residues 1–25 (MKQGKSFIFYCLVLLLCGFQQLSSA) form the signal peptide.

The protein belongs to the LptD family. As to quaternary structure, component of the lipopolysaccharide transport and assembly complex. Interacts with LptE and LptA.

The protein resides in the cell outer membrane. Functionally, together with LptE, is involved in the assembly of lipopolysaccharide (LPS) at the surface of the outer membrane. This chain is LPS-assembly protein LptD, found in Coxiella burnetii (strain RSA 493 / Nine Mile phase I).